Here is a 227-residue protein sequence, read N- to C-terminus: Orotidine 5'-phosphate decarboxylase (227 aa).

Substrate contacts are provided by residues Asp-12, Lys-34, 61–70 (DLKLHDIPNT), Thr-117, Arg-178, Gln-187, Gly-207, and Arg-208. Lys-63 (proton donor) is an active-site residue.

The protein belongs to the OMP decarboxylase family. Type 1 subfamily. In terms of assembly, homodimer.

The catalysed reaction is orotidine 5'-phosphate + H(+) = UMP + CO2. It functions in the pathway pyrimidine metabolism; UMP biosynthesis via de novo pathway; UMP from orotate: step 2/2. Functionally, catalyzes the decarboxylation of orotidine 5'-monophosphate (OMP) to uridine 5'-monophosphate (UMP). The protein is Orotidine 5'-phosphate decarboxylase of Anaeromyxobacter sp. (strain K).